The sequence spans 143 residues: Large ribosomal subunit protein uL11 (143 aa).

It belongs to the universal ribosomal protein uL11 family. As to quaternary structure, part of the ribosomal stalk of the 50S ribosomal subunit. Interacts with L10 and the large rRNA to form the base of the stalk. L10 forms an elongated spine to which L12 dimers bind in a sequential fashion forming a multimeric L10(L12)X complex. Post-translationally, one or more lysine residues are methylated.

Forms part of the ribosomal stalk which helps the ribosome interact with GTP-bound translation factors. In Pseudomonas syringae pv. tomato (strain ATCC BAA-871 / DC3000), this protein is Large ribosomal subunit protein uL11.